We begin with the raw amino-acid sequence, 150 residues long: Large ribosomal subunit protein uL15 (150 aa).

A disordered region spans residues 1–49 (MELHQLKSVSKSRNHKSKVVGRGHGSGLGKTSSRGQKGQKARKSGLTRL). The span at 10–21 (SKSRNHKSKVVG) shows a compositional bias: basic residues.

It belongs to the universal ribosomal protein uL15 family. In terms of assembly, part of the 50S ribosomal subunit.

Binds to the 23S rRNA. The polypeptide is Large ribosomal subunit protein uL15 (Mycoplasma genitalium (strain ATCC 33530 / DSM 19775 / NCTC 10195 / G37) (Mycoplasmoides genitalium)).